The primary structure comprises 407 residues: 12S rRNA N(4)-cytidine methyltransferase METTL15 (407 aa).

S-adenosyl-L-methionine-binding positions include 100–102 (GGH), Asp-119, Phe-146, Asp-169, and Gln-176. Ser-358 carries the post-translational modification Phosphoserine.

It belongs to the methyltransferase superfamily. RsmH family.

The protein localises to the mitochondrion matrix. It catalyses the reaction cytidine(839) in 12S rRNA + S-adenosyl-L-methionine = N(4)-methylcytidine(839) in 12S rRNA + S-adenosyl-L-homocysteine + H(+). Functionally, N4-methylcytidine (m4C) methyltransferase responsible for the methylation of position C839 in mitochondrial 12S rRNA. Involved in the stabilization of 12S rRNA folding, therefore facilitating the assembly of the mitochondrial small ribosomal subunits. The polypeptide is 12S rRNA N(4)-cytidine methyltransferase METTL15 (Homo sapiens (Human)).